A 301-amino-acid polypeptide reads, in one-letter code: Large ribosomal subunit protein uL18z (301 aa).

The protein belongs to the universal ribosomal protein uL18 family. In terms of assembly, component of the large ribosomal subunit (LSU). In terms of tissue distribution, expressed in seedlings, roots, stems, leaves, inflorescences and siliques.

It localises to the cytoplasm. The protein resides in the nucleus. It is found in the nucleolus. Its subcellular location is the nucleoplasm. In terms of biological role, component of the ribosome, a large ribonucleoprotein complex responsible for the synthesis of proteins in the cell. The small ribosomal subunit (SSU) binds messenger RNAs (mRNAs) and translates the encoded message by selecting cognate aminoacyl-transfer RNA (tRNA) molecules. The large subunit (LSU) contains the ribosomal catalytic site termed the peptidyl transferase center (PTC), which catalyzes the formation of peptide bonds, thereby polymerizing the amino acids delivered by tRNAs into a polypeptide chain. The nascent polypeptides leave the ribosome through a tunnel in the LSU and interact with protein factors that function in enzymatic processing, targeting, and the membrane insertion of nascent chains at the exit of the ribosomal tunnel. Seems involved in the regulation of cell proliferation. Essential in leaf polarity establishment, probably having a role for translation in leaf dorsoventral patterning to specify leaf adaxial identity. The protein is Large ribosomal subunit protein uL18z of Arabidopsis thaliana (Mouse-ear cress).